The sequence spans 734 residues: Exonuclease 1 (734 aa).

The segment at 1-99 (MGIQGLLQFL…KARREKRQTN (99 aa)) is N-domain. Mg(2+)-binding residues include Asp30, Asp78, Glu150, Asp152, Asp171, Asp173, and Asp225. Positions 138-229 (RSEGVDYIVA…ILSGCDYLPS (92 aa)) are I-domain. 3 disordered regions span residues 599-650 (EAEN…CQFT), 656-675 (AHQSFFPEPKGSAPKSKVPG), and 685-716 (GLRTKVKPRAPAKVSGLTNRSNTKATRNNENV). The segment covering 604 to 620 (PSWQSSCIKSDTVSQID) has biased composition (polar residues). Basic and acidic residues predominate over residues 621–641 (SNEKLLKKQDIEDTDSDEHAS). The segment covering 700–715 (GLTNRSNTKATRNNEN) has biased composition (polar residues).

It belongs to the XPG/RAD2 endonuclease family. EXO1 subfamily. The cofactor is Mg(2+).

The protein resides in the nucleus. 5'-&gt;3' double-stranded DNA exonuclease which may also contain a cryptic 3'-&gt;5' double-stranded DNA exonuclease activity. Also exhibits endonuclease activity against 5'-overhanging flap structures similar to those generated by displacement synthesis when DNA polymerase encounters the 5'-end of a downstream Okazaki fragment. Required for DNA mismatch repair (MMR). This Xenopus laevis (African clawed frog) protein is Exonuclease 1 (exo1).